The following is a 485-amino-acid chain: Alpha-amylase (485 aa).

The N-terminal stretch at 1–18 (MQHLSILLVVLGSSIAFA) is a signal peptide. A Pyrrolidone carboxylic acid modification is found at glutamine 19. A disulfide bridge connects residues cysteine 46 and cysteine 102. Ca(2+)-binding residues include asparagine 116, arginine 163, and aspartate 172. Cysteine 152 and cysteine 165 are oxidised to a cystine. Chloride is bound at residue arginine 200. Residue aspartate 202 is the Nucleophile of the active site. Ca(2+) is bound at residue histidine 206. Glutamate 238 serves as the catalytic Proton donor. Asparagine 301 contributes to the chloride binding site. A disulfide bridge connects residues cysteine 369 and cysteine 375. Residues asparagine 423 and asparagine 449 are each glycosylated (N-linked (GlcNAc...) asparagine). Cysteines 440 and 452 form a disulfide.

The protein belongs to the glycosyl hydrolase 13 family. As to quaternary structure, monomer. Ca(2+) is required as a cofactor. Chloride serves as cofactor.

The enzyme catalyses Endohydrolysis of (1-&gt;4)-alpha-D-glucosidic linkages in polysaccharides containing three or more (1-&gt;4)-alpha-linked D-glucose units.. Its function is as follows. Involved in the digestion of starch. This is Alpha-amylase from Hypothenemus hampei (Coffee berry borer).